We begin with the raw amino-acid sequence, 450 residues long: 3-phosphoshikimate 1-carboxyvinyltransferase (450 aa).

3-phosphoshikimate is bound by residues Lys-23, Ser-24, and Arg-28. Lys-23 serves as a coordination point for phosphoenolpyruvate. Phosphoenolpyruvate-binding residues include Gly-96 and Arg-124. The 3-phosphoshikimate site is built by Ser-167, Ser-168, Gln-169, Ser-196, Glu-311, and His-340. Gln-169 provides a ligand contact to phosphoenolpyruvate. Glu-311 (proton acceptor) is an active-site residue. The phosphoenolpyruvate site is built by Arg-344, Arg-385, and Lys-410. The disordered stretch occupies residues 426–450 (GQGWGYPQPRSGQRARRATGQGSGG).

It belongs to the EPSP synthase family. As to quaternary structure, monomer.

Its subcellular location is the cytoplasm. The enzyme catalyses 3-phosphoshikimate + phosphoenolpyruvate = 5-O-(1-carboxyvinyl)-3-phosphoshikimate + phosphate. The protein operates within metabolic intermediate biosynthesis; chorismate biosynthesis; chorismate from D-erythrose 4-phosphate and phosphoenolpyruvate: step 6/7. Functionally, catalyzes the transfer of the enolpyruvyl moiety of phosphoenolpyruvate (PEP) to the 5-hydroxyl of shikimate-3-phosphate (S3P) to produce enolpyruvyl shikimate-3-phosphate and inorganic phosphate. In Mycobacterium tuberculosis (strain ATCC 25177 / H37Ra), this protein is 3-phosphoshikimate 1-carboxyvinyltransferase.